The chain runs to 657 residues: MEVETTEPEPDCVVQPPSPSDDFSCQMRISEKISPLKTCFKKKQEQKRLGTGTLRSLRPILNTLLESGSLDGVFRARDQNRDESSLHEHIVKKPLEINPSCPPAENSMPVLIPDGTNVEGQLPEAHPSTDAPEQGVPIQDHSFPPETISGTVADSTTGHFQTDLLHPVSGDVPTSPDCVDKVMDYVPGAFQDNSFTIQYILDTSDKLSTELFQDKSEEASLELVFELVNQLQYHTHQENGIEICMDFLQGTCIYGRDCLKHHTVLPYHWQIKRTTTQKWQSVSNDSQEHLERFYCNPENDRMRMKYGGQDFWADLNAMTVFETTEFDQLRRLSTPPCSNSNSIYHTFWKFFCRDHFGWREYPESVVRLIEEANSRGLKEVRFMMWNNHYILHNSFFRREIKRRPLFRSCFILIPYLQTLGGVPTQASLPLEATSSQIICPDGVTSANFYPETWVYMHPSQDFIQVPVSAEDKSYRIIYNLFHKTVPEFKYRILQILRVQNQFLWEKYKRKKEYMNRKMSGRDRIINERHLFHGTSQDVVDGICKHNFDPRVCGKHATMFGQGSYFAKKASYSHNFSKKSSKGVHFMFLAKVLTGRYTMGSHGMRRPPPVNPGSVTSDLYDSCVDNFFEPQIFVIFNDDQSYPYFVIQYEEVSNTVSI.

Over residues 1-10 (MEVETTEPEP) the composition is skewed to acidic residues. Residues 1–22 (MEVETTEPEPDCVVQPPSPSDD) are disordered. ADP-ribosylcysteine is present on cysteine 39. The short motif at 41–48 (KKKQEQKR) is the Nuclear localization signal element. The segment at 121 to 154 (QLPEAHPSTDAPEQGVPIQDHSFPPETISGTVAD) is disordered. The C3H1-type zinc-finger motif lies at 238–265 (ENGIEICMDFLQGTCIYGRDCLKHHTVL). Positions 333-411 (STPPCSNSNS…RRPLFRSCFI (79 aa)) constitute a WWE domain. A PARP catalytic domain is found at 449–657 (YPETWVYMHP…YEEVSNTVSI (209 aa)).

This sequence belongs to the ARTD/PARP family. Interacts with AHR. Post-translationally, auto-mono-ADP-ribosylated. In terms of tissue distribution, ubiquitously expressed.

Its subcellular location is the nucleus. It catalyses the reaction L-aspartyl-[protein] + NAD(+) = 4-O-(ADP-D-ribosyl)-L-aspartyl-[protein] + nicotinamide. The catalysed reaction is L-glutamyl-[protein] + NAD(+) = 5-O-(ADP-D-ribosyl)-L-glutamyl-[protein] + nicotinamide. It carries out the reaction L-cysteinyl-[protein] + NAD(+) = S-(ADP-D-ribosyl)-L-cysteinyl-[protein] + nicotinamide + H(+). In terms of biological role, ADP-ribosyltransferase that mediates mono-ADP-ribosylation of glutamate, aspartate and cysteine residues on target proteins. Acts as a negative regulator of AHR by mediating mono-ADP-ribosylation of AHR, leading to inhibit transcription activator activity of AHR. The protein is Protein mono-ADP-ribosyltransferase TIPARP of Mus musculus (Mouse).